The following is a 465-amino-acid chain: Cysteine--tRNA ligase (465 aa).

Cys-30 is a binding site for Zn(2+). The 'HIGH' region signature appears at 32-42; the sequence is ITVYDYCHIGH. Cys-214, His-239, and Glu-243 together coordinate Zn(2+). The 'KMSKS' region signature appears at 271-275; it reads KMSKS. Lys-274 serves as a coordination point for ATP.

Belongs to the class-I aminoacyl-tRNA synthetase family. As to quaternary structure, monomer. Requires Zn(2+) as cofactor.

Its subcellular location is the cytoplasm. It catalyses the reaction tRNA(Cys) + L-cysteine + ATP = L-cysteinyl-tRNA(Cys) + AMP + diphosphate. The chain is Cysteine--tRNA ligase from Burkholderia thailandensis (strain ATCC 700388 / DSM 13276 / CCUG 48851 / CIP 106301 / E264).